A 316-amino-acid polypeptide reads, in one-letter code: Apolipoprotein E (316 aa).

Residues 1-18 (MKALWAVLVVTLLAGCLA) form the signal peptide. 8 repeat units span residues 76 to 97 (VLME…EQLG), 98 to 119 (PMAE…SRLG), 120 to 141 (ADME…TMLG), 142 to 163 (QSTE…KRLM), 164 to 185 (RDAE…EGAE), 186 to 207 (RGVG…QRTA), 208 to 229 (NLGA…ARIR), and 230 to 251 (GRLE…EQME). Residues 76–251 (VLMEDTMTEL…RLEEVREQME (176 aa)) form an 8 X 22 AA approximate tandem repeats region. Methionine 139 bears the Methionine sulfoxide mark. Serine 143 is modified (phosphoserine). Residues 154 to 164 (HLRKLRKRLMR) form an LDL and other lipoprotein receptors binding region. 158–161 (LRKR) provides a ligand contact to heparin. The segment at 206–286 (TANLGAGAGK…GWFEPLVEDM (81 aa)) is lipid-binding and lipoprotein association. 225–232 (GARIRGRL) serves as a coordination point for heparin. Residues 262-316 (QQMRLQAEIFQARLKGWFEPLVEDMQRQWANLVEKIQASVAANPIPPSSVPQESQ) are homooligomerization. A specificity for association with VLDL region spans residues 274-286 (RLKGWFEPLVEDM).

Belongs to the apolipoprotein A1/A4/E family. As to quaternary structure, homotetramer. May interact with ABCA1; functionally associated with ABCA1 in the biogenesis of HDLs. May interact with APP/A4 amyloid-beta peptide; the interaction is extremely stable in vitro but its physiological significance is unclear. May interact with MAPT. May interact with MAP2. In the cerebrospinal fluid, interacts with secreted SORL1. Interacts with PMEL; this allows the loading of PMEL luminal fragment on ILVs to induce fibril nucleation. APOE exists as multiple glycosylated and sialylated glycoforms within cells and in plasma. The extent of glycosylation and sialylation are tissue and context specific. In terms of processing, glycated in plasma VLDL. Post-translationally, phosphorylated by FAM20C in the extracellular medium.

Its subcellular location is the secreted. It localises to the extracellular space. It is found in the extracellular matrix. The protein localises to the extracellular vesicle. The protein resides in the endosome. Its subcellular location is the multivesicular body. Functionally, APOE is an apolipoprotein, a protein associating with lipid particles, that mainly functions in lipoprotein-mediated lipid transport between organs via the plasma and interstitial fluids. APOE is a core component of plasma lipoproteins and is involved in their production, conversion and clearance. Apolipoproteins are amphipathic molecules that interact both with lipids of the lipoprotein particle core and the aqueous environment of the plasma. As such, APOE associates with chylomicrons, chylomicron remnants, very low density lipoproteins (VLDL) and intermediate density lipoproteins (IDL) but shows a preferential binding to high-density lipoproteins (HDL). It also binds a wide range of cellular receptors including the LDL receptor/LDLR, the LDL receptor-related proteins LRP1, LRP2 and LRP8 and the very low-density lipoprotein receptor/VLDLR that mediate the cellular uptake of the APOE-containing lipoprotein particles. Finally, APOE also has a heparin-binding activity and binds heparan-sulfate proteoglycans on the surface of cells, a property that supports the capture and the receptor-mediated uptake of APOE-containing lipoproteins by cells. A main function of APOE is to mediate lipoprotein clearance through the uptake of chylomicrons, VLDLs, and HDLs by hepatocytes. APOE is also involved in the biosynthesis by the liver of VLDLs as well as their uptake by peripheral tissues ensuring the delivery of triglycerides and energy storage in muscle, heart and adipose tissues. By participating in the lipoprotein-mediated distribution of lipids among tissues, APOE plays a critical role in plasma and tissues lipid homeostasis. APOE is also involved in two steps of reverse cholesterol transport, the HDLs-mediated transport of cholesterol from peripheral tissues to the liver, and thereby plays an important role in cholesterol homeostasis. First, it is functionally associated with ABCA1 in the biogenesis of HDLs in tissues. Second, it is enriched in circulating HDLs and mediates their uptake by hepatocytes. APOE also plays an important role in lipid transport in the central nervous system, regulating neuron survival and sprouting. This chain is Apolipoprotein E (Apoe), found in Onychomys torridus (Southern grasshopper mouse).